The chain runs to 303 residues: Probable cell division protein WhiA (303 aa).

Positions 272-303 (SIQQVADALEFPITKSGVNHRLRKINKIADDL) form a DNA-binding region, H-T-H motif.

The protein belongs to the WhiA family.

Its function is as follows. Involved in cell division and chromosome segregation. This chain is Probable cell division protein WhiA, found in Streptococcus pyogenes serotype M12 (strain MGAS2096).